The following is a 313-amino-acid chain: Aspartate carbamoyltransferase catalytic subunit (313 aa).

Positions 58 and 59 each coordinate carbamoyl phosphate. Residue K86 coordinates L-aspartate. R108, H136, and Q139 together coordinate carbamoyl phosphate. Residues R169 and R223 each contribute to the L-aspartate site. The carbamoyl phosphate site is built by G265 and P266.

Belongs to the aspartate/ornithine carbamoyltransferase superfamily. ATCase family. In terms of assembly, heterododecamer (2C3:3R2) of six catalytic PyrB chains organized as two trimers (C3), and six regulatory PyrI chains organized as three dimers (R2).

The enzyme catalyses carbamoyl phosphate + L-aspartate = N-carbamoyl-L-aspartate + phosphate + H(+). The protein operates within pyrimidine metabolism; UMP biosynthesis via de novo pathway; (S)-dihydroorotate from bicarbonate: step 2/3. Its function is as follows. Catalyzes the condensation of carbamoyl phosphate and aspartate to form carbamoyl aspartate and inorganic phosphate, the committed step in the de novo pyrimidine nucleotide biosynthesis pathway. The sequence is that of Aspartate carbamoyltransferase catalytic subunit from Anaeromyxobacter dehalogenans (strain 2CP-C).